Here is an 834-residue protein sequence, read N- to C-terminus: Semaphorin-4C (834 aa).

An N-terminal signal peptide occupies residues M1 to G20. Topologically, residues A21–G664 are extracellular. Residues R30–L497 enclose the Sema domain. The segment at S46–R489 is dominant negative effect on myogenic differentiation. C99 and C110 are disulfide-bonded. N106 and N121 each carry an N-linked (GlcNAc...) asparagine glycan. 3 disulfide bridges follow: C128–C137, C261–C370, and C285–C330. N-linked (GlcNAc...) asparagine glycosylation is found at N310 and N419. The PSI domain maps to D499 to N552. 2 cysteine pairs are disulfide-bonded: C500/C517 and C509/C526. 2 N-linked (GlcNAc...) asparagine glycosylation sites follow: N522 and N565. In terms of domain architecture, Ig-like C2-type spans K557–A645. C578 and C628 are oxidised to a cystine. Residues L665 to L685 traverse the membrane as a helical segment. Residues S686 to V834 are Cytoplasmic-facing. S743 bears the Phosphoserine mark. Residues G749–V834 form a disordered region. Positions G757–S773 are enriched in pro residues. A PDZ-binding motif is present at residues E831–V834.

The protein belongs to the semaphorin family. Interacts (via the PDZ-binding motif) with GIPC (via the PDZ domain). Interacts with NCDN. Interacts (via the PDZ-binding motif) with DLG4. Interacts with PLXNB2. As to expression, predominantly expressed in brain (at protein level).

The protein localises to the postsynaptic density membrane. It is found in the cytoplasmic vesicle. It localises to the secretory vesicle. Its subcellular location is the synaptic vesicle membrane. Its function is as follows. Cell surface receptor for PLXNB2 that plays an important role in cell-cell signaling. PLXNB2 binding promotes downstream activation of RHOA and phosphorylation of ERBB2 at 'Tyr-1248'. Required for normal brain development, axon guidance and cell migration. Probable signaling receptor which may play a role in myogenic differentiation through activation of the stress-activated MAPK cascade. In Mus musculus (Mouse), this protein is Semaphorin-4C (Sema4c).